The primary structure comprises 449 residues: Phosphoglucosamine mutase (449 aa).

Serine 105 functions as the Phosphoserine intermediate in the catalytic mechanism. Positions 105, 242, 244, and 246 each coordinate Mg(2+). Serine 105 bears the Phosphoserine mark.

It belongs to the phosphohexose mutase family. It depends on Mg(2+) as a cofactor. Activated by phosphorylation.

The enzyme catalyses alpha-D-glucosamine 1-phosphate = D-glucosamine 6-phosphate. Its function is as follows. Catalyzes the conversion of glucosamine-6-phosphate to glucosamine-1-phosphate. In Clavibacter sepedonicus (Clavibacter michiganensis subsp. sepedonicus), this protein is Phosphoglucosamine mutase.